Consider the following 535-residue polypeptide: CTP synthase (535 aa).

The segment at 1 to 267 (MTKYIFVTGG…DQIVCDHLKL (267 aa)) is amidoligase domain. Ser13 serves as a coordination point for CTP. Ser13 is a UTP binding site. 14 to 19 (SLGKGI) lines the ATP pocket. Tyr54 serves as a coordination point for L-glutamine. Residue Asp71 coordinates ATP. Mg(2+)-binding residues include Asp71 and Glu141. CTP contacts are provided by residues 148-150 (DIE), 188-193 (KTKPTQ), and Lys224. Residues 188-193 (KTKPTQ) and Lys224 contribute to the UTP site. The region spanning 292–534 (RIALVGKYVE…VQASITNKES (243 aa)) is the Glutamine amidotransferase type-1 domain. L-glutamine is bound at residue Gly354. Residue Cys381 is the Nucleophile; for glutamine hydrolysis of the active site. Residues 382 to 385 (LGMQ), Glu405, and Arg462 each bind L-glutamine. Catalysis depends on residues His507 and Glu509.

Belongs to the CTP synthase family. Homotetramer.

It catalyses the reaction UTP + L-glutamine + ATP + H2O = CTP + L-glutamate + ADP + phosphate + 2 H(+). The enzyme catalyses L-glutamine + H2O = L-glutamate + NH4(+). The catalysed reaction is UTP + NH4(+) + ATP = CTP + ADP + phosphate + 2 H(+). Its pathway is pyrimidine metabolism; CTP biosynthesis via de novo pathway; CTP from UDP: step 2/2. With respect to regulation, allosterically activated by GTP, when glutamine is the substrate; GTP has no effect on the reaction when ammonia is the substrate. The allosteric effector GTP functions by stabilizing the protein conformation that binds the tetrahedral intermediate(s) formed during glutamine hydrolysis. Inhibited by the product CTP, via allosteric rather than competitive inhibition. Its function is as follows. Catalyzes the ATP-dependent amination of UTP to CTP with either L-glutamine or ammonia as the source of nitrogen. Regulates intracellular CTP levels through interactions with the four ribonucleotide triphosphates. The protein is CTP synthase of Bacillus cytotoxicus (strain DSM 22905 / CIP 110041 / 391-98 / NVH 391-98).